Consider the following 101-residue polypeptide: Ubiquitin-related modifier 1 homolog (101 aa).

Position 101 is a 1-thioglycine (G101). G101 is covalently cross-linked (Glycyl lysine isopeptide (Gly-Lys) (interchain with K-? in acceptor proteins)).

The protein belongs to the URM1 family. Interacts with cer. In terms of processing, C-terminal thiocarboxylation occurs in 2 steps, it is first acyl-adenylated (-COAMP) via the hesA/moeB/thiF part of the MOCS3 homolog, then thiocarboxylated (-COSH) via the rhodanese domain of the MOCS3 homolog.

It localises to the cytoplasm. The protein operates within tRNA modification; 5-methoxycarbonylmethyl-2-thiouridine-tRNA biosynthesis. Functionally, acts as a sulfur carrier required for 2-thiolation of mcm(5)S(2)U at tRNA wobble positions of cytosolic tRNA(Lys), tRNA(Glu) and tRNA(Gln). Serves as sulfur donor in tRNA 2-thiolation reaction by being thiocarboxylated (-COSH) at its C-terminus by MOCS3. The sulfur is then transferred to tRNA to form 2-thiolation of mcm(5)S(2)U. Also acts as a ubiquitin-like protein (UBL) that is covalently conjugated via an isopeptide bond to lysine residues of target proteins such as Prx2/Jafrac1, Ciao1, Eip71CD and GILT1. The thiocarboxylated form serves as substrate for conjugation and oxidative stress specifically induces the formation of UBL-protein conjugates. The polypeptide is Ubiquitin-related modifier 1 homolog (Drosophila sechellia (Fruit fly)).